The chain runs to 225 residues: Suppressor of cytokine signaling 3 (225 aa).

A kinase inhibitory region (KIR) region spans residues 22–33; the sequence is LKTFSSKSEYQL. Residues 34–45 are extended SH2 subdomain (ESS); the sequence is VVNAVRKLQESG. The region spanning 46 to 142 is the SH2 domain; sequence FYWSAVTGGE…TPSFSLPPTE (97 aa). The segment at 131–160 is disordered; it reads PGTPSFSLPPTEPSSEVPEQPPAQALPGST. In terms of domain architecture, SOCS box spans 177–224; that stretch reads VLSRPLSSNVATLQHLCRKTVNGHLDSYEKVTQLPGPIREFLDQYDAP.

As to quaternary structure, interacts with multiple activated proteins of the tyrosine kinase signaling pathway including IGF1 receptor, insulin receptor and JAK2. Binding to JAK2 is mediated through the KIR and SH2 domains to a phosphorylated tyrosine residue within the JAK2 JH1 domain. Binds specific activated tyrosine residues of the leptin, EPO, IL12, GSCF and gp130 receptors. Interaction with CSNK1E stabilizes SOCS3 protein. Component of the probable ECS(SOCS3) E3 ubiquitin-protein ligase complex which contains CUL5, RNF7/RBX2, elongin BC complex and SOCS3. Interacts with CUL5, RNF7, ELOB and ELOC. Interacts with FGFR3. Interacts with INSR. Interacts with BCL10; this interaction may interfere with BCL10-binding with PELI2. Interacts with NOD2 (via CARD domain); the interaction promotes NOD2 degradation. In terms of processing, phosphorylated on tyrosine residues after stimulation by the cytokines, IL-2, EPO or IGF1. In terms of tissue distribution, low expression in lung, spleen and thymus. Expressed in Th2 but not TH1 cells.

The protein operates within protein modification; protein ubiquitination. Functionally, SOCS family proteins form part of a classical negative feedback system that regulates cytokine signal transduction. SOCS3 is involved in negative regulation of cytokines that signal through the JAK/STAT pathway. Inhibits cytokine signal transduction by binding to tyrosine kinase receptors including IL6ST/gp130, LIF, erythropoietin, insulin, IL12, GCSF and leptin receptors. Binding to JAK2 inhibits its kinase activity and regulates IL6 signaling. Suppresses fetal liver erythropoiesis. Regulates onset and maintenance of allergic responses mediated by T-helper type 2 cells. Probable substrate recognition component of a SCF-like ECS (Elongin BC-CUL2/5-SOCS-box protein) E3 ubiquitin-protein ligase complex which mediates the ubiquitination and subsequent proteasomal degradation of target proteins. In Mus musculus (Mouse), this protein is Suppressor of cytokine signaling 3.